A 341-amino-acid polypeptide reads, in one-letter code: tRNA N6-adenosine threonylcarbamoyltransferase (341 aa).

Fe cation is bound by residues H115 and H119. Substrate is bound by residues 137-141 (IVSGG), D170, G183, D187, and N276. D304 lines the Fe cation pocket.

The protein belongs to the KAE1 / TsaD family. Fe(2+) serves as cofactor.

The protein localises to the cytoplasm. The catalysed reaction is L-threonylcarbamoyladenylate + adenosine(37) in tRNA = N(6)-L-threonylcarbamoyladenosine(37) in tRNA + AMP + H(+). Required for the formation of a threonylcarbamoyl group on adenosine at position 37 (t(6)A37) in tRNAs that read codons beginning with adenine. Is involved in the transfer of the threonylcarbamoyl moiety of threonylcarbamoyl-AMP (TC-AMP) to the N6 group of A37, together with TsaE and TsaB. TsaD likely plays a direct catalytic role in this reaction. The protein is tRNA N6-adenosine threonylcarbamoyltransferase of Staphylococcus aureus (strain JH1).